Reading from the N-terminus, the 326-residue chain is Endochitinase (326 aa).

Positions M1–A25 are cleaved as a signal peptide. One can recognise a Chitin-binding type-1 domain in the interval E26 to G66. Cystine bridges form between C28–C43, C37–C49, C42–C56, C60–C64, C96–C158, C170–C178, and C277–C309. E140 (proton donor) is an active-site residue.

This sequence belongs to the glycosyl hydrolase 19 family. Chitinase class I subfamily. Expressed in the pulp of the fruit (at protein level). Expressed in mesocarp (at protein level).

The enzyme catalyses Random endo-hydrolysis of N-acetyl-beta-D-glucosaminide (1-&gt;4)-beta-linkages in chitin and chitodextrins.. Functionally, defense against chitin-containing fungal pathogens. Has in vitro antifungal activity against F.oxysporum inhibiting its growth and the branching of its hyphae. Has endochitinase activity, but no exochitinase or lysozyme activities. This Persea americana (Avocado) protein is Endochitinase.